Here is a 196-residue protein sequence, read N- to C-terminus: MFPNGLIAFAFGYLLGSIPFGMILTRIAGTQDLRSIGSGNIGATNVLRTGRRGLAAATLLGDMLKGTAAVVIALLLSGPGAAMAATLGAFLGHLFPVWLKFRGGKGVATYIGVLLGLFWPAALAFCAIWLLVAFTTRYSSLSALLASLTTPLLLWGFGHPQFALLFAVLTVLLWFKHRENIRRLFAGSEGRIGAKA.

4 consecutive transmembrane segments (helical) span residues 5–25 (GLIAFAFGYLLGSIPFGMILT), 70–90 (VVIALLLSGPGAAMAATLGAF), 111–131 (IGVLLGLFWPAALAFCAIWLL), and 152–172 (LLLWGFGHPQFALLFAVLTVL).

This sequence belongs to the PlsY family. In terms of assembly, probably interacts with PlsX.

It localises to the cell inner membrane. It carries out the reaction an acyl phosphate + sn-glycerol 3-phosphate = a 1-acyl-sn-glycero-3-phosphate + phosphate. It participates in lipid metabolism; phospholipid metabolism. Its function is as follows. Catalyzes the transfer of an acyl group from acyl-phosphate (acyl-PO(4)) to glycerol-3-phosphate (G3P) to form lysophosphatidic acid (LPA). This enzyme utilizes acyl-phosphate as fatty acyl donor, but not acyl-CoA or acyl-ACP. This is Glycerol-3-phosphate acyltransferase from Nitrobacter winogradskyi (strain ATCC 25391 / DSM 10237 / CIP 104748 / NCIMB 11846 / Nb-255).